The chain runs to 503 residues: Maturase K (503 aa).

The protein belongs to the intron maturase 2 family. MatK subfamily.

The protein resides in the plastid. It localises to the chloroplast. Functionally, usually encoded in the trnK tRNA gene intron. Probably assists in splicing its own and other chloroplast group II introns. The sequence is that of Maturase K from Actinodium cunninghamii (Albany daisy).